The following is a 355-amino-acid chain: 3-isopropylmalate dehydrogenase (355 aa).

Substrate contacts are provided by Arg-90, Arg-100, Arg-128, and Asp-222. Residues Asp-222, Asp-246, and Asp-250 each coordinate Mg(2+). 280-292 lines the NAD(+) pocket; it reads GSAPDIAGKGIAN.

Belongs to the isocitrate and isopropylmalate dehydrogenases family. LeuB type 1 subfamily. In terms of assembly, homodimer. Requires Mg(2+) as cofactor. Mn(2+) serves as cofactor.

Its subcellular location is the cytoplasm. The enzyme catalyses (2R,3S)-3-isopropylmalate + NAD(+) = 4-methyl-2-oxopentanoate + CO2 + NADH. It functions in the pathway amino-acid biosynthesis; L-leucine biosynthesis; L-leucine from 3-methyl-2-oxobutanoate: step 3/4. Functionally, catalyzes the oxidation of 3-carboxy-2-hydroxy-4-methylpentanoate (3-isopropylmalate) to 3-carboxy-4-methyl-2-oxopentanoate. The product decarboxylates to 4-methyl-2 oxopentanoate. This Burkholderia multivorans (strain ATCC 17616 / 249) protein is 3-isopropylmalate dehydrogenase.